The primary structure comprises 578 residues: Transmembrane protein 121B (578 aa).

Disordered regions lie at residues Met1–Ser84 and Ala106–Ser129. Low complexity-rich tracts occupy residues Pro8 to Ser17 and Gly44 to Ser53. Positions Arg54–Ser67 are enriched in gly residues. Ser167 bears the Phosphoserine mark. A disordered region spans residues Arg529–Cys557. Over residues Pro538–Gln549 the composition is skewed to pro residues. Ser552 is modified (phosphoserine).

It belongs to the TMEM121 family. Widely expressed, especially in adult heart, brain, prostate, testes, peripherical blood leukocytes and fetal brain.

The sequence is that of Transmembrane protein 121B from Homo sapiens (Human).